Reading from the N-terminus, the 265-residue chain is Bidirectional sugar transporter NEC1 (265 aa).

Residues 1 to 8 are Extracellular-facing; that stretch reads MAQLRADD. Residues 9-29 form a helical membrane-spanning segment; it reads LSFIFGLLGNIVSFMVFLAPV. The MtN3/slv 1 domain maps to 11–97; it reads FIFGLLGNIV…SLFLFYAPRK (87 aa). Over 30 to 44 the chain is Cytoplasmic; the sequence is PTFYKIYKRKSSEGY. The helical transmembrane segment at 45–65 threads the bilayer; the sequence is QAIPYMVALFSAGLLLYYAYL. Over 66–71 the chain is Extracellular; the sequence is RKNAYL. Residues 72–92 traverse the membrane as a helical segment; the sequence is IVSINGFGCAIELTYISLFLF. The Cytoplasmic portion of the chain corresponds to 93-103; sequence YAPRKSKIFTG. The chain crosses the membrane as a helical span at residues 104–124; it reads WLMLLELGALGMVMPITYLLA. Residues 125–130 are Extracellular-facing; it reads EGSHRV. A helical membrane pass occupies residues 131-151; sequence MIVGWICAAINVAVFAAPLSI. The region spanning 132–216 is the MtN3/slv 2 domain; it reads IVGWICAAIN…LLYFVYKDSK (85 aa). At 152 to 164 the chain is on the cytoplasmic side; it reads MRQVIKTKSVEFM. Residues 165–185 traverse the membrane as a helical segment; sequence PFTLSLFLTLCATMWFFYGFF. At 186 to 190 the chain is on the extracellular side; the sequence is KKDFY. Residues 191–211 form a helical membrane-spanning segment; the sequence is IAFPNILGFLFGIVQMLLYFV. Residues 212–265 are Cytoplasmic-facing; the sequence is YKDSKRIDDEKSDPVREATKSKEGVEIIINIEDDNSDNALQSMEKDFSRLRTSK.

The protein belongs to the SWEET sugar transporter family. Forms homooligomers and/or heterooligomers. As to expression, highly expressed in nectary tissue and weakly in the stamen, especially in stomium cells and in the upper part of the filaments.

It localises to the cell membrane. Mediates both low-affinity uptake and efflux of sugar across the plasma membrane. Promotes the formation of phloem bundles in mid-veins. Probably involved in the development of stomium cells that control anther opening time. Required for pollen viability. The polypeptide is Bidirectional sugar transporter NEC1 (NEC1) (Petunia hybrida (Petunia)).